A 361-amino-acid chain; its full sequence is Ornithine carbamoyltransferase, mitochondrial (361 aa).

A mitochondrion-targeting transit peptide spans 1-24 (MIPTARCGALRQKIPVQAVRQYSS). Carbamoyl phosphate is bound by residues 89–92 (STRT), Arg-140, His-167, and Gln-170. Positions 207, 273, 277, and 278 each coordinate L-ornithine. Cys-315 serves as the catalytic Proton acceptor. Carbamoyl phosphate is bound by residues 315-316 (CL) and Arg-342.

Belongs to the aspartate/ornithine carbamoyltransferase superfamily. OTCase family. In terms of assembly, homotrimer.

The protein localises to the mitochondrion matrix. The enzyme catalyses carbamoyl phosphate + L-ornithine = L-citrulline + phosphate + H(+). It functions in the pathway amino-acid biosynthesis; L-arginine biosynthesis; L-arginine from L-ornithine and carbamoyl phosphate: step 1/3. The protein is Ornithine carbamoyltransferase, mitochondrial (arg1) of Aspergillus terreus.